The chain runs to 111 residues: MVLLDKLWDDIVAGPQPERGLGMLRKVPQPLNLKDEGESSKITMPTTPTTPVTPTTPISARKDNVWRSVFHPGSNLSSKTMGNQVFDSPQPNSPTVYDWMYSGETRSKHHR.

The segment at 18-111 (ERGLGMLRKV…SGETRSKHHR (94 aa)) is disordered. The span at 43–57 (TMPTTPTTPVTPTTP) shows a compositional bias: low complexity. The span at 74 to 95 (SNLSSKTMGNQVFDSPQPNSPT) shows a compositional bias: polar residues.

The protein belongs to the DRM1/ARP family.

This Fragaria ananassa (Strawberry) protein is Auxin-repressed 12.5 kDa protein.